The primary structure comprises 599 residues: Putative sensor histidine kinase NtrY-like (599 aa).

The next 4 helical transmembrane spans lie at 17–37, 44–64, 85–105, and 285–305; these read ILIL…FYVI, FSTI…LGIL, IVIA…VFSV, and IMFI…GVLF. Residues 307–361 enclose the HAMP domain; the sequence is AQIVKPIKKLVTATDKVKDGDLTVQVPENEVDKDEIGTLYVAFNRMIKQLSRQQR. The Histidine kinase domain maps to 378–589; that stretch reads KVAHEIKNPL…IIDIKFDLKE (212 aa). His381 is modified (phosphohistidine; by autocatalysis).

It is found in the cell membrane. It carries out the reaction ATP + protein L-histidine = ADP + protein N-phospho-L-histidine.. Its function is as follows. Member of the two-component regulatory system RT0603/RT0550. This is Putative sensor histidine kinase NtrY-like from Rickettsia typhi (strain ATCC VR-144 / Wilmington).